A 482-amino-acid chain; its full sequence is tRNA sulfurtransferase (482 aa).

The THUMP domain occupies 61–165 (LVIRDALTRI…DDRLLLIKGR (105 aa)). Residues 183-184 (LI), lysine 265, glycine 287, and glutamine 296 each bind ATP. A disulfide bond links cysteine 344 and cysteine 456. Residues 404–482 (FGPNDVILDI…GFANVKVYRP (79 aa)) enclose the Rhodanese domain. The active-site Cysteine persulfide intermediate is cysteine 456.

This sequence belongs to the ThiI family.

Its subcellular location is the cytoplasm. It catalyses the reaction [ThiI sulfur-carrier protein]-S-sulfanyl-L-cysteine + a uridine in tRNA + 2 reduced [2Fe-2S]-[ferredoxin] + ATP + H(+) = [ThiI sulfur-carrier protein]-L-cysteine + a 4-thiouridine in tRNA + 2 oxidized [2Fe-2S]-[ferredoxin] + AMP + diphosphate. It carries out the reaction [ThiS sulfur-carrier protein]-C-terminal Gly-Gly-AMP + S-sulfanyl-L-cysteinyl-[cysteine desulfurase] + AH2 = [ThiS sulfur-carrier protein]-C-terminal-Gly-aminoethanethioate + L-cysteinyl-[cysteine desulfurase] + A + AMP + 2 H(+). The protein operates within cofactor biosynthesis; thiamine diphosphate biosynthesis. Catalyzes the ATP-dependent transfer of a sulfur to tRNA to produce 4-thiouridine in position 8 of tRNAs, which functions as a near-UV photosensor. Also catalyzes the transfer of sulfur to the sulfur carrier protein ThiS, forming ThiS-thiocarboxylate. This is a step in the synthesis of thiazole, in the thiamine biosynthesis pathway. The sulfur is donated as persulfide by IscS. This Salmonella typhimurium (strain LT2 / SGSC1412 / ATCC 700720) protein is tRNA sulfurtransferase.